We begin with the raw amino-acid sequence, 200 residues long: Holliday junction branch migration complex subunit RuvA (200 aa).

A domain I region spans residues 1–63; that stretch reads MYAYIKGTLS…EDAQLLYGFI (63 aa). A domain II region spans residues 64-142; that stretch reads NEEEKEMFLS…ITEENSDDLL (79 aa). The interval 143–149 is flexible linker; it reads QTQVNGN. The interval 150–200 is domain III; the sequence is EQNQIISEALLALQALGYSKRELTKVEKSLNKHNVNSVDEAVKIGLQTLVS.

Belongs to the RuvA family. In terms of assembly, homotetramer. Forms an RuvA(8)-RuvB(12)-Holliday junction (HJ) complex. HJ DNA is sandwiched between 2 RuvA tetramers; dsDNA enters through RuvA and exits via RuvB. An RuvB hexamer assembles on each DNA strand where it exits the tetramer. Each RuvB hexamer is contacted by two RuvA subunits (via domain III) on 2 adjacent RuvB subunits; this complex drives branch migration. In the full resolvosome a probable DNA-RuvA(4)-RuvB(12)-RuvC(2) complex forms which resolves the HJ.

Its subcellular location is the cytoplasm. Functionally, the RuvA-RuvB-RuvC complex processes Holliday junction (HJ) DNA during genetic recombination and DNA repair, while the RuvA-RuvB complex plays an important role in the rescue of blocked DNA replication forks via replication fork reversal (RFR). RuvA specifically binds to HJ cruciform DNA, conferring on it an open structure. The RuvB hexamer acts as an ATP-dependent pump, pulling dsDNA into and through the RuvAB complex. HJ branch migration allows RuvC to scan DNA until it finds its consensus sequence, where it cleaves and resolves the cruciform DNA. In Staphylococcus epidermidis (strain ATCC 35984 / DSM 28319 / BCRC 17069 / CCUG 31568 / BM 3577 / RP62A), this protein is Holliday junction branch migration complex subunit RuvA.